A 941-amino-acid polypeptide reads, in one-letter code: Coiled-coil and C2 domain-containing protein 1A (941 aa).

At threonine 91 the chain carries Phosphothreonine. Disordered regions lie at residues 183–248 (TINE…PCSP) and 301–336 (SRLP…VPQP). Polar residues predominate over residues 228–239 (APSTTAQTSAKP). Residue serine 247 is modified to Phosphoserine. A compositionally biased stretch (pro residues) spans 303 to 318 (LPPPPDQLSPEPPLPA). Residues 338-384 (KNLLEALEQRMERYHVAAAQAKAKGDQRKARMHERIVKQYQDAIRAH) are a coiled coil. The tract at residues 428–482 (ANHEEGSDEEEEETPKKNTPAASTAQPKASPSRAPPSGPAPAGKAASKGTSTRAQ) is disordered. Serine 434 bears the Phosphoserine mark. Residues 467–476 (APAGKAASKG) show a composition bias toward low complexity. The stretch at 475–508 (KGTSTRAQQQLAFLEGRKKQLLQAALRAKQKNDV) forms a coiled coil. The 135-residue stretch at 628-762 (RFEQRTFSVI…ETACEVHEIL (135 aa)) folds into the C2 domain.

This sequence belongs to the CC2D1 family. Strongly expressed in several brain areas including frontal cortex, cortex, mesencephalon, hippocampus, midbrain and hypothalamus. Also expressed in testis and at low levels in pituitary, liver and kidney. In brain the highest levels are detected in hippocampal pyramidal cells and raphe nuclei.

The protein localises to the cytoplasm. It is found in the nucleus. The protein resides in the cytoskeleton. Its subcellular location is the microtubule organizing center. It localises to the centrosome. Functionally, transcription factor that binds specifically to the DRE (dual repressor element) and represses 5-HT1A gene transcription though this element. Mediates HDAC-independent repression of HTR1A promoter. CAMK2G inhibits CC2D1a-induced repression of the HTR1A. May play a role in the altered regulation of 5-HT1A receptors associated with anxiety and major depression. Performs essential function in controlling functional maturation of synapses. This chain is Coiled-coil and C2 domain-containing protein 1A (Cc2d1a), found in Rattus norvegicus (Rat).